We begin with the raw amino-acid sequence, 285 residues long: mRNA decay factor CTH2 (285 aa).

Residues I37–N55 are required for mRNA decay activity. A disordered region spans residues L132–E164. Over residues S153–E164 the composition is skewed to polar residues. 2 consecutive C3H1-type zinc fingers follow at residues L169–G197 and N207–D235. The interval S252 to K271 is disordered.

Interacts with DHH1.

It localises to the nucleus. The protein localises to the cytoplasm. Its subcellular location is the P-body. Binds to specific AU-rich elements (ARE) in the 3'-untranslated region of target mRNAs and promotes their degradation. In response to iron deficiency, promotes the decay of many mRNAs encoding proteins involved in iron-dependent pathways. Recruits the DHH1 helicase to the SDH4 mRNA and promotes SDH4 mRNA decay. Also destabilizes target mRNA by modulating 3'-end processing, creating extended transcripts that are prone for degradation. The sequence is that of mRNA decay factor CTH2 (TIS11) from Saccharomyces cerevisiae (strain ATCC 204508 / S288c) (Baker's yeast).